The primary structure comprises 127 residues: Chondrosarcoma-associated gene 2/3 protein (127 aa).

The tract at residues 68–127 (MSRKPRASSPLSNNHPPTPKRRGSGRHPLNPGPEALSKFPRQPGREKGPIKEVPGTKGSP) is disordered.

Weakly expressed in kidney. Expressed in various tumor cell lines including carcinomas, myeloid and lymphoid malignancies, melanomas and prostate cancer. Overexpressed in taxol-resistant breast cancer line MDA 435TR and the doxorubicin-resistant multiple myelanoma lines RPMI-8226/Dox40 and RPMI-8226/MDR10V.

Its function is as follows. Drug-resistance related protein, its expression is associated with the chemotherapy resistant and neoplastic phenotype. May also be linked to the malignant phenotype. This Homo sapiens (Human) protein is Chondrosarcoma-associated gene 2/3 protein (CSAG2).